We begin with the raw amino-acid sequence, 87 residues long: UPF0512 protein B (87 aa).

It belongs to the UPF0512 family.

The protein is UPF0512 protein B of Dictyostelium discoideum (Social amoeba).